The following is a 264-amino-acid chain: B3-hordein (264 aa).

The span at 1–15 (QQPVSRQPQQIIPQQ) shows a compositional bias: low complexity. The tract at residues 1-66 (QQPVSRQPQQ…QQPFPQQPPF (66 aa)) is disordered. Pro residues-rich tracts occupy residues 16-44 (PQQP…PYPQ) and 52-64 (QPFP…PQQP).

The protein belongs to the gliadin/glutenin family. Developing endosperm.

Functionally, sulfur-rich seed storage protein. The polypeptide is B3-hordein (Hordeum vulgare (Barley)).